The following is a 388-amino-acid chain: Lipid-A-disaccharide synthase (388 aa).

This sequence belongs to the LpxB family.

It catalyses the reaction a lipid X + a UDP-2-N,3-O-bis[(3R)-3-hydroxyacyl]-alpha-D-glucosamine = a lipid A disaccharide + UDP + H(+). Its pathway is bacterial outer membrane biogenesis; LPS lipid A biosynthesis. Its function is as follows. Condensation of UDP-2,3-diacylglucosamine and 2,3-diacylglucosamine-1-phosphate to form lipid A disaccharide, a precursor of lipid A, a phosphorylated glycolipid that anchors the lipopolysaccharide to the outer membrane of the cell. This chain is Lipid-A-disaccharide synthase, found in Sulfurihydrogenibium sp. (strain YO3AOP1).